We begin with the raw amino-acid sequence, 177 residues long: MMVVATTKILTAAEYLQREEQATEKSEFIQGEIIPIAGASANHNRLTFNLSRLLPLEIGDRQYEIFVSDMRLWIAESESYFYPDVMVIAEEPKFTDNSQMAVTNPSLIAEVLSTSAAGFDKNQKFGFYRTIPKLQEYLLIDQFCYRVEHYQKVGDRQWLLTELMGENAEIEFSFMKI.

This sequence to Synechocystis PCC 6803 slr1290 and sll0925.

This is an uncharacterized protein from Synechocystis sp. (strain ATCC 27184 / PCC 6803 / Kazusa).